Here is a 258-residue protein sequence, read N- to C-terminus: Hydroxyacylglutathione hydrolase (258 aa).

Residues H56, H58, D60, H61, H112, D132, and H170 each contribute to the Zn(2+) site.

It belongs to the metallo-beta-lactamase superfamily. Glyoxalase II family. As to quaternary structure, monomer. It depends on Zn(2+) as a cofactor.

It catalyses the reaction an S-(2-hydroxyacyl)glutathione + H2O = a 2-hydroxy carboxylate + glutathione + H(+). Its pathway is secondary metabolite metabolism; methylglyoxal degradation; (R)-lactate from methylglyoxal: step 2/2. Its function is as follows. Thiolesterase that catalyzes the hydrolysis of S-D-lactoyl-glutathione to form glutathione and D-lactic acid. This chain is Hydroxyacylglutathione hydrolase, found in Pseudomonas paraeruginosa (strain DSM 24068 / PA7) (Pseudomonas aeruginosa (strain PA7)).